Consider the following 121-residue polypeptide: Flagellar protein FliT (121 aa).

Residues 1-50 are required for homodimerization; the sequence is MNNAPHLYFAWQQLVEKSQLMLRLATEEQWDELIASEMAYVNAVQEIAHL. The fliD binding stretch occupies residues 60-98; that stretch reads MQEQLRPMLHLILDNESKVKQLLQIRMDELAKLVGQSSV.

This sequence belongs to the FliT family. As to quaternary structure, homodimer. Interacts with FliD and FlhC.

It localises to the cytoplasm. The protein localises to the cytosol. Functionally, dual-function protein that regulates the transcription of class 2 flagellar operons and that also acts as an export chaperone for the filament-capping protein FliD. As a transcriptional regulator, acts as an anti-FlhDC factor; it directly binds FlhC, thus inhibiting the binding of the FlhC/FlhD complex to class 2 promoters, resulting in decreased expression of class 2 flagellar operons. As a chaperone, effects FliD transition to the membrane by preventing its premature polymerization, and by directing it to the export apparatus. The polypeptide is Flagellar protein FliT (Shigella flexneri serotype 5b (strain 8401)).